A 602-amino-acid chain; its full sequence is DNA mismatch repair protein MutL (602 aa).

It belongs to the DNA mismatch repair MutL/HexB family.

Functionally, this protein is involved in the repair of mismatches in DNA. It is required for dam-dependent methyl-directed DNA mismatch repair. May act as a 'molecular matchmaker', a protein that promotes the formation of a stable complex between two or more DNA-binding proteins in an ATP-dependent manner without itself being part of a final effector complex. This is DNA mismatch repair protein MutL from Baumannia cicadellinicola subsp. Homalodisca coagulata.